The following is a 334-amino-acid chain: Protein-methionine-sulfoxide reductase catalytic subunit MsrP (334 aa).

The segment at residues 1-44 is a signal peptide (tat-type signal); the sequence is MKKNQFLKESDITAESVFFMKRRQVLKALGISAAALSLPHAAHA. Residues Asn-88, 91 to 92, Cys-146, Thr-181, Asn-233, Arg-238, and 249 to 251 contribute to the Mo-molybdopterin site; these read YE and GIK.

It belongs to the MsrP family. In terms of assembly, heterodimer of a catalytic subunit (MsrP) and a heme-binding subunit (MsrQ). Requires Mo-molybdopterin as cofactor. Predicted to be exported by the Tat system. The position of the signal peptide cleavage has not been experimentally proven.

It is found in the periplasm. The enzyme catalyses L-methionyl-[protein] + a quinone + H2O = L-methionyl-(S)-S-oxide-[protein] + a quinol. It catalyses the reaction L-methionyl-[protein] + a quinone + H2O = L-methionyl-(R)-S-oxide-[protein] + a quinol. Functionally, part of the MsrPQ system that repairs oxidized periplasmic proteins containing methionine sulfoxide residues (Met-O), using respiratory chain electrons. Thus protects these proteins from oxidative-stress damage caused by reactive species of oxygen and chlorine generated by the host defense mechanisms. MsrPQ is essential for the maintenance of envelope integrity under bleach stress, rescuing a wide series of structurally unrelated periplasmic proteins from methionine oxidation, including the primary periplasmic chaperone SurA and the lipoprotein Pal. The catalytic subunit MsrP is non-stereospecific, being able to reduce both (R-) and (S-) diastereoisomers of methionine sulfoxide. The sequence is that of Protein-methionine-sulfoxide reductase catalytic subunit MsrP from Shigella dysenteriae serotype 1 (strain Sd197).